Here is a 282-residue protein sequence, read N- to C-terminus: NH(3)-dependent NAD(+) synthetase (282 aa).

51–58 (GISGGVDS) is a binding site for ATP. Asp57 provides a ligand contact to Mg(2+). Residue Arg148 participates in deamido-NAD(+) binding. Thr168 contributes to the ATP binding site. Glu173 is a Mg(2+) binding site. Positions 181 and 188 each coordinate deamido-NAD(+). ATP contacts are provided by Lys197 and Thr219. 268-269 (HK) is a deamido-NAD(+) binding site.

It belongs to the NAD synthetase family. As to quaternary structure, homodimer.

It catalyses the reaction deamido-NAD(+) + NH4(+) + ATP = AMP + diphosphate + NAD(+) + H(+). The protein operates within cofactor biosynthesis; NAD(+) biosynthesis; NAD(+) from deamido-NAD(+) (ammonia route): step 1/1. Functionally, catalyzes the ATP-dependent amidation of deamido-NAD to form NAD. Uses ammonia as a nitrogen source. This is NH(3)-dependent NAD(+) synthetase from Burkholderia lata (strain ATCC 17760 / DSM 23089 / LMG 22485 / NCIMB 9086 / R18194 / 383).